Here is a 251-residue protein sequence, read N- to C-terminus: 2,3-bisphosphoglycerate-dependent phosphoglycerate mutase (251 aa).

Residues 11 to 18 (RHGESDWN), 24 to 25 (TG), Arg-63, 90 to 93 (ERHY), Lys-101, 117 to 118 (RR), and 184 to 185 (GN) contribute to the substrate site. The active-site Tele-phosphohistidine intermediate is His-12. Residue Glu-90 is the Proton donor/acceptor of the active site.

Belongs to the phosphoglycerate mutase family. BPG-dependent PGAM subfamily.

The enzyme catalyses (2R)-2-phosphoglycerate = (2R)-3-phosphoglycerate. Its pathway is carbohydrate degradation; glycolysis; pyruvate from D-glyceraldehyde 3-phosphate: step 3/5. Functionally, catalyzes the interconversion of 2-phosphoglycerate and 3-phosphoglycerate. The chain is 2,3-bisphosphoglycerate-dependent phosphoglycerate mutase from Mycobacterium ulcerans (strain Agy99).